Here is a 379-residue protein sequence, read N- to C-terminus: Putative 8-amino-7-oxononanoate synthase (379 aa).

Substrate is bound at residue Arg21. 97-98 contributes to the pyridoxal 5'-phosphate binding site; it reads GY. Position 122 (His122) interacts with substrate. Residues Ser169, 194 to 197, and 223 to 226 each bind pyridoxal 5'-phosphate; these read DDAH and TLSK. The residue at position 226 (Lys226) is an N6-(pyridoxal phosphate)lysine. Position 340 (Thr340) interacts with substrate.

The protein belongs to the class-II pyridoxal-phosphate-dependent aminotransferase family. BioF subfamily. Homodimer. Pyridoxal 5'-phosphate serves as cofactor.

The catalysed reaction is 6-carboxyhexanoyl-[ACP] + L-alanine + H(+) = (8S)-8-amino-7-oxononanoate + holo-[ACP] + CO2. It participates in cofactor biosynthesis; biotin biosynthesis. Functionally, catalyzes the decarboxylative condensation of pimeloyl-[acyl-carrier protein] and L-alanine to produce 8-amino-7-oxononanoate (AON), [acyl-carrier protein], and carbon dioxide. In Bacillus licheniformis (strain ATCC 14580 / DSM 13 / JCM 2505 / CCUG 7422 / NBRC 12200 / NCIMB 9375 / NCTC 10341 / NRRL NRS-1264 / Gibson 46), this protein is Putative 8-amino-7-oxononanoate synthase (bioF).